The sequence spans 47 residues: Glyceraldehyde-3-phosphate dehydrogenase, cytosolic (47 aa).

It belongs to the glyceraldehyde-3-phosphate dehydrogenase family. In terms of assembly, homotetramer.

It is found in the cytoplasm. It catalyses the reaction D-glyceraldehyde 3-phosphate + phosphate + NAD(+) = (2R)-3-phospho-glyceroyl phosphate + NADH + H(+). It participates in carbohydrate degradation; glycolysis; pyruvate from D-glyceraldehyde 3-phosphate: step 1/5. The protein is Glyceraldehyde-3-phosphate dehydrogenase, cytosolic of Pseudotsuga menziesii (Douglas-fir).